Consider the following 162-residue polypeptide: Endoribonuclease YbeY (162 aa).

Zn(2+) contacts are provided by His-118, His-122, and His-128.

The protein belongs to the endoribonuclease YbeY family. Zn(2+) serves as cofactor.

It is found in the cytoplasm. Functionally, single strand-specific metallo-endoribonuclease involved in late-stage 70S ribosome quality control and in maturation of the 3' terminus of the 16S rRNA. This chain is Endoribonuclease YbeY, found in Glaesserella parasuis serovar 5 (strain SH0165) (Haemophilus parasuis).